The primary structure comprises 122 residues: Holo-[acyl-carrier-protein] synthase (122 aa).

Residues aspartate 8 and glutamate 57 each contribute to the Mg(2+) site.

The protein belongs to the P-Pant transferase superfamily. AcpS family. Mg(2+) serves as cofactor.

The protein resides in the cytoplasm. It carries out the reaction apo-[ACP] + CoA = holo-[ACP] + adenosine 3',5'-bisphosphate + H(+). Transfers the 4'-phosphopantetheine moiety from coenzyme A to a Ser of acyl-carrier-protein. This is Holo-[acyl-carrier-protein] synthase from Exiguobacterium sp. (strain ATCC BAA-1283 / AT1b).